We begin with the raw amino-acid sequence, 458 residues long: ATP synthase subunit beta (458 aa).

Position 148-155 (148-155 (GGAGVGKT)) interacts with ATP.

Belongs to the ATPase alpha/beta chains family. As to quaternary structure, F-type ATPases have 2 components, CF(1) - the catalytic core - and CF(0) - the membrane proton channel. CF(1) has five subunits: alpha(3), beta(3), gamma(1), delta(1), epsilon(1). CF(0) has three main subunits: a(1), b(2) and c(9-12). The alpha and beta chains form an alternating ring which encloses part of the gamma chain. CF(1) is attached to CF(0) by a central stalk formed by the gamma and epsilon chains, while a peripheral stalk is formed by the delta and b chains.

It is found in the cell inner membrane. The catalysed reaction is ATP + H2O + 4 H(+)(in) = ADP + phosphate + 5 H(+)(out). Its function is as follows. Produces ATP from ADP in the presence of a proton gradient across the membrane. The catalytic sites are hosted primarily by the beta subunits. The polypeptide is ATP synthase subunit beta (Shewanella pealeana (strain ATCC 700345 / ANG-SQ1)).